The primary structure comprises 230 residues: Demethylluteothin O-methyltransferase (230 aa).

This sequence belongs to the methyltransferase superfamily.

It carries out the reaction demethylluteothin + S-adenosyl-L-methionine = luteothin + S-adenosyl-L-homocysteine. Its pathway is antibiotic biosynthesis. It functions in the pathway polyketide biosynthesis. Its function is as follows. Methyltransferase involved in the biosynthesis of the antibiotic aureothin, a nitroaryl polyketide metabolite with antifungal, cytotoxic and insecticidal activities. Catalyzes the methylation of demethylluteothin to luteothin (also called deoxyaureothin). Is specific for its gamma-pyrone substrate, and does not act on the alpha-pyrone isomer. The sequence is that of Demethylluteothin O-methyltransferase from Streptomyces thioluteus.